The chain runs to 379 residues: Alcohol dehydrogenase 1 (379 aa).

Residues Cys47, Thr49, His69, Cys99, Cys102, Cys105, Cys113, and Cys177 each coordinate Zn(2+). Residues Thr49 and His69 each contribute to the an alcohol site. Position 49 (Thr49) interacts with NAD(+). NAD(+)-binding positions include 202–207 (GLGAVG), Asp226, Arg231, Thr272, Val295, 295–297 (VGV), Phe322, and Arg372.

This sequence belongs to the zinc-containing alcohol dehydrogenase family. Homodimer. Requires Zn(2+) as cofactor.

It localises to the cytoplasm. It catalyses the reaction a primary alcohol + NAD(+) = an aldehyde + NADH + H(+). The enzyme catalyses a secondary alcohol + NAD(+) = a ketone + NADH + H(+). This chain is Alcohol dehydrogenase 1 (ADH1), found in Cenchrus americanus (Pearl millet).